The primary structure comprises 198 residues: Cell division protein SepF (198 aa).

Residues 170–198 (EVPQPPARPARPASTNPPAWGNETNRMAQ) are disordered. Over residues 179–188 (ARPASTNPPA) the composition is skewed to low complexity.

It belongs to the SepF family. As to quaternary structure, homodimer. Interacts with FtsZ.

The protein resides in the cytoplasm. Cell division protein that is part of the divisome complex and is recruited early to the Z-ring. Probably stimulates Z-ring formation, perhaps through the cross-linking of FtsZ protofilaments. Its function overlaps with FtsA. This chain is Cell division protein SepF, found in Nostoc sp. (strain PCC 7120 / SAG 25.82 / UTEX 2576).